The primary structure comprises 299 residues: Acetylglutamate kinase (299 aa).

Substrate is bound by residues 72–73, Arg94, and Asn196; that span reads GG.

This sequence belongs to the acetylglutamate kinase family. ArgB subfamily.

The protein localises to the cytoplasm. It catalyses the reaction N-acetyl-L-glutamate + ATP = N-acetyl-L-glutamyl 5-phosphate + ADP. It participates in amino-acid biosynthesis; L-arginine biosynthesis; N(2)-acetyl-L-ornithine from L-glutamate: step 2/4. In terms of biological role, catalyzes the ATP-dependent phosphorylation of N-acetyl-L-glutamate. The polypeptide is Acetylglutamate kinase (Burkholderia cenocepacia (strain ATCC BAA-245 / DSM 16553 / LMG 16656 / NCTC 13227 / J2315 / CF5610) (Burkholderia cepacia (strain J2315))).